Here is a 183-residue protein sequence, read N- to C-terminus: Acireductone dioxygenase (183 aa).

4 residues coordinate Fe(2+): His99, His101, Glu105, and His144. Positions 99, 101, 105, and 144 each coordinate Ni(2+).

Belongs to the acireductone dioxygenase (ARD) family. As to quaternary structure, monomer. Fe(2+) serves as cofactor. The cofactor is Ni(2+).

It catalyses the reaction 1,2-dihydroxy-5-(methylsulfanyl)pent-1-en-3-one + O2 = 3-(methylsulfanyl)propanoate + CO + formate + 2 H(+). The catalysed reaction is 1,2-dihydroxy-5-(methylsulfanyl)pent-1-en-3-one + O2 = 4-methylsulfanyl-2-oxobutanoate + formate + 2 H(+). The protein operates within amino-acid biosynthesis; L-methionine biosynthesis via salvage pathway; L-methionine from S-methyl-5-thio-alpha-D-ribose 1-phosphate: step 5/6. Catalyzes 2 different reactions between oxygen and the acireductone 1,2-dihydroxy-3-keto-5-methylthiopentene (DHK-MTPene) depending upon the metal bound in the active site. Fe-containing acireductone dioxygenase (Fe-ARD) produces formate and 2-keto-4-methylthiobutyrate (KMTB), the alpha-ketoacid precursor of methionine in the methionine recycle pathway. Ni-containing acireductone dioxygenase (Ni-ARD) produces methylthiopropionate, carbon monoxide and formate, and does not lie on the methionine recycle pathway. This chain is Acireductone dioxygenase, found in Microcystis aeruginosa.